The following is a 632-amino-acid chain: MAU2 chromatid cohesion factor homolog (632 aa).

2 TPR repeats span residues 453 to 486 (GGFY…ANAE) and 493 to 526 (SCSL…ASKI).

This sequence belongs to the SCC4/mau-2 family. As to quaternary structure, interacts with Nipped-B to form the cohesin loading complex.

The protein resides in the nucleus. It is found in the nucleoplasm. Required for association of the cohesin complex with chromatin during interphase. Plays a role in sister chromatid cohesion and normal progression through prometaphase. In Drosophila yakuba (Fruit fly), this protein is MAU2 chromatid cohesion factor homolog.